We begin with the raw amino-acid sequence, 560 residues long: Secreted RxLR effector protein 142 (560 aa).

The N-terminal stretch at 1-22 is a signal peptide; that stretch reads MRRAYFVAIALLVAAGGKTAAG. Disordered stretches follow at residues 48 to 73 and 354 to 377; these read QSQN…ERTP and INRP…LNNQ. Residues 54–72 show a composition bias toward basic and acidic residues; sequence ESRDPKDDLKLSAGNEERT. Residues 56–71 carry the RxLR-dEER motif; it reads RDPKDDLKLSAGNEER. Residues 361 to 377 are compositionally biased toward polar residues; the sequence is GPSTNGATTSNGGLNNQ.

This sequence belongs to the RxLR effector family.

The protein localises to the secreted. It is found in the host nucleus. Secreted effector that completely suppresses the host cell death induced by cell death-inducing proteins. In Plasmopara viticola (Downy mildew of grapevine), this protein is Secreted RxLR effector protein 142.